Here is a 354-residue protein sequence, read N- to C-terminus: GDSL esterase/lipase At5g03820 (354 aa).

A signal peptide spans 1-24 (MKMFIIMLMTFSVIACFYAGVGTG). The active-site Nucleophile is the Ser-37. Residues Asn-66, Asn-100, Asn-237, Asn-256, Asn-257, Asn-261, and Asn-321 are each glycosylated (N-linked (GlcNAc...) asparagine). Active-site residues include Asp-329 and His-332.

The protein belongs to the 'GDSL' lipolytic enzyme family.

It is found in the secreted. This chain is GDSL esterase/lipase At5g03820, found in Arabidopsis thaliana (Mouse-ear cress).